A 294-amino-acid polypeptide reads, in one-letter code: Cytidine deaminase (294 aa).

CMP/dCMP-type deaminase domains follow at residues aspartate 48–threonine 168 and alanine 187–phenylalanine 294. Asparagine 89–glutamate 91 contacts substrate. Histidine 102 contacts Zn(2+). Glutamate 104 serves as the catalytic Proton donor. 2 residues coordinate Zn(2+): cysteine 129 and cysteine 132.

Belongs to the cytidine and deoxycytidylate deaminase family. As to quaternary structure, homodimer. It depends on Zn(2+) as a cofactor.

It carries out the reaction cytidine + H2O + H(+) = uridine + NH4(+). It catalyses the reaction 2'-deoxycytidine + H2O + H(+) = 2'-deoxyuridine + NH4(+). Its function is as follows. This enzyme scavenges exogenous and endogenous cytidine and 2'-deoxycytidine for UMP synthesis. This Yersinia pseudotuberculosis serotype O:1b (strain IP 31758) protein is Cytidine deaminase.